The chain runs to 614 residues: ATP-dependent zinc metalloprotease FtsH (614 aa).

The Cytoplasmic segment spans residues Met1–Arg5. A helical transmembrane segment spans residues Trp6 to Gln26. At Thr27–Ser127 the chain is on the periplasmic side. The helical transmembrane segment at Ile128–Val148 threads the bilayer. Residues Val149 to Gly614 lie on the Cytoplasmic side of the membrane. Residue Gly214 to Thr221 participates in ATP binding. His436 lines the Zn(2+) pocket. Glu437 is an active-site residue. His440 and Asp513 together coordinate Zn(2+).

It in the central section; belongs to the AAA ATPase family. This sequence in the C-terminal section; belongs to the peptidase M41 family. In terms of assembly, homohexamer. Requires Zn(2+) as cofactor.

The protein resides in the cell inner membrane. Acts as a processive, ATP-dependent zinc metallopeptidase for both cytoplasmic and membrane proteins. Plays a role in the quality control of integral membrane proteins. In Opitutus terrae (strain DSM 11246 / JCM 15787 / PB90-1), this protein is ATP-dependent zinc metalloprotease FtsH.